A 160-amino-acid polypeptide reads, in one-letter code: MPKTSVWKTRVGTQILMGKITDITQIGIDRIPCAQVRCQMNEFNIYLKKYFARSFDFWALDKTSLGNIGDTVLIKQIDGSSRPKANVSHAVDRVVFKFGNIVDPVTGRKIFNDTFADEIDLKKVLVEEVVDKPLEEESMLFEERRALQIRRLEQEKEANV.

This sequence belongs to the universal ribosomal protein uS17 family. As to quaternary structure, component of the mitochondrial ribosome small subunit (28S) which comprises a 12S rRNA and about 30 distinct proteins.

The protein localises to the mitochondrion. The sequence is that of Small ribosomal subunit protein uS17m (mrps-17) from Caenorhabditis elegans.